The primary structure comprises 432 residues: UDP-N-acetylglucosamine 1-carboxyvinyltransferase (432 aa).

Residue 22 to 23 (KN) coordinates phosphoenolpyruvate. R101 contributes to the UDP-N-acetyl-alpha-D-glucosamine binding site. Residue C125 is the Proton donor of the active site. C125 carries the post-translational modification 2-(S-cysteinyl)pyruvic acid O-phosphothioketal. UDP-N-acetyl-alpha-D-glucosamine contacts are provided by residues 130-134 (RPVDL), D315, and I337.

Belongs to the EPSP synthase family. MurA subfamily.

It localises to the cytoplasm. It carries out the reaction phosphoenolpyruvate + UDP-N-acetyl-alpha-D-glucosamine = UDP-N-acetyl-3-O-(1-carboxyvinyl)-alpha-D-glucosamine + phosphate. It functions in the pathway cell wall biogenesis; peptidoglycan biosynthesis. In terms of biological role, cell wall formation. Adds enolpyruvyl to UDP-N-acetylglucosamine. The chain is UDP-N-acetylglucosamine 1-carboxyvinyltransferase from Paramagnetospirillum magneticum (strain ATCC 700264 / AMB-1) (Magnetospirillum magneticum).